Reading from the N-terminus, the 135-residue chain is Interleukin-4 (135 aa).

Residues 1–24 form the signal peptide; the sequence is MGLTSQLIPVLVCLLVCTSHFVHG. 3 disulfides stabilise this stretch: Cys27–Cys135, Cys48–Cys85, and Cys70–Cys105. The N-linked (GlcNAc...) asparagine glycan is linked to Asn62.

This sequence belongs to the IL-4/IL-13 family.

Its subcellular location is the secreted. Participates in at least several B-cell activation processes as well as of other cell types. It is a costimulator of DNA-synthesis. It induces the expression of class II MHC molecules on resting B-cells. It enhances both secretion and cell surface expression of IgE and IgG1. It also regulates the expression of the low affinity Fc receptor for IgE (CD23) on both lymphocytes and monocytes. Positively regulates IL31RA expression in macrophages. Stimulates autophagy in dendritic cells by interfering with mTORC1 signaling and through the induction of RUFY4. The polypeptide is Interleukin-4 (IL4) (Bos taurus (Bovine)).